Consider the following 177-residue polypeptide: Photosystem I assembly protein Ycf4 (177 aa).

The next 2 helical transmembrane spans lie at 20–40 and 60–80; these read VALL…SSYF and LVMG…WAVI.

The protein belongs to the Ycf4 family.

It is found in the cellular thylakoid membrane. Functionally, seems to be required for the assembly of the photosystem I complex. In Synechococcus sp. (strain RCC307), this protein is Photosystem I assembly protein Ycf4.